The primary structure comprises 276 residues: Aspartate dehydrogenase domain-containing protein (276 aa).

This sequence belongs to the L-aspartate dehydrogenase family.

This chain is Aspartate dehydrogenase domain-containing protein (aspdh), found in Danio rerio (Zebrafish).